Reading from the N-terminus, the 507-residue chain is Tryptophan aminotransferase-related protein 2 (507 aa).

The segment at 91–135 (PPPHHHHHDAGLATRSSDAAVHRRARTASSMAPSTGKPAVTTDSV) is disordered. Pyridoxal 5'-phosphate is bound by residues tyrosine 169, 211-212 (ST), asparagine 282, 304-307 (DLAY), 327-330 (TVSK), and arginine 338. Lysine 330 is modified (N6-(pyridoxal phosphate)lysine).

This sequence belongs to the alliinase family. Pyridoxal 5'-phosphate is required as a cofactor. In terms of tissue distribution, widely expressed.

The catalysed reaction is L-tryptophan + 2-oxoglutarate = indole-3-pyruvate + L-glutamate. Its pathway is plant hormone metabolism; auxin biosynthesis. Probable tryptophan aminotransferase involved in auxin (IAA) biosynthesis. Required for auxin production to initiate multiple change in growth in response to environmental and developmental cues. Functions upstream of YUCCA1 in auxin biosynthesis. Required for polar auxin transport. This Oryza sativa subsp. japonica (Rice) protein is Tryptophan aminotransferase-related protein 2.